Here is a 495-residue protein sequence, read N- to C-terminus: Membrane-bound glycerophospholipid O-acyltransferase 1 (495 aa).

6 helical membrane passes run 34–54, 70–90, 126–146, 180–200, 238–258, and 297–317; these read VNFV…RIYL, IFGI…LFVL, IYIF…MIVT, PSFL…AGPC, TGAV…FLTL, and YFAW…FSGV. Active-site residues include Asn350 and His381. 3 consecutive transmembrane segments (helical) span residues 371 to 391, 426 to 446, and 450 to 470; these read VLTF…YFTF, TWAV…MLAV, and ISLY…IILF. At Ser488 the chain carries Phosphoserine.

It belongs to the membrane-bound acyltransferase family. In terms of tissue distribution, expressed in neutrophils.

It is found in the endoplasmic reticulum membrane. The enzyme catalyses a 1-acyl-sn-glycero-3-phospho-L-serine + an acyl-CoA = a 1,2-diacyl-sn-glycero-3-phospho-L-serine + CoA. It carries out the reaction a 1-acyl-sn-glycero-3-phosphocholine + an acyl-CoA = a 1,2-diacyl-sn-glycero-3-phosphocholine + CoA. The catalysed reaction is a 1-acyl-sn-glycero-3-phosphoethanolamine + an acyl-CoA = a 1,2-diacyl-sn-glycero-3-phosphoethanolamine + CoA. It catalyses the reaction 1-(9Z-octadecenoyl)-sn-glycero-3-phospho-L-serine + (9Z)-octadecenoyl-CoA = 1,2-di-(9Z)-octadecenoyl-sn-glycero-3-phospho-L-serine + CoA. The enzyme catalyses 1-(9Z-octadecenoyl)-sn-glycero-3-phospho-L-serine + octadecanoyl-CoA = 1-(9Z-octadecenoyl)-2-octadecanoyl-sn-glycero-3-phospho-L-serine + CoA. It carries out the reaction 1-(9Z-octadecenoyl)-sn-glycero-3-phospho-L-serine + (9Z)-hexadecenoyl-CoA = 1-(9Z-octadecenoyl)-2-(9Z-hexadecenoyl)-sn-glycero-3-phospho-L-serine + CoA. The catalysed reaction is 1-(9Z-octadecenoyl)-sn-glycero-3-phospho-L-serine + (9Z,12Z)-octadecadienoyl-CoA = 1-(9Z-octadecenoyl)-2-(9Z,12Z-octadienoyl)-sn-glycero-3-phospho-L-serine + CoA. It catalyses the reaction 1-hexadecanoyl-sn-glycero-3-phosphocholine + (9Z)-octadecenoyl-CoA = 1-hexadecanoyl-2-(9Z-octadecenoyl)-sn-glycero-3-phosphocholine + CoA. The enzyme catalyses a 1-O-(1Z-alkenyl)-sn-glycero-3-phosphoethanolamine + (9Z)-octadecenoyl-CoA = 1-O-(1Z)-alkenyl-2-(9Z)-octadecenoyl-sn-glycero-3-phosphoethanolamine + CoA. It carries out the reaction 1-octadecanoyl-sn-glycero-3-phosphoethanolamine + (9Z)-octadecenoyl-CoA = 1-octadecanoyl-2-(9Z-octadecenoyl)-sn-glycero-3-phosphoethanolamine + CoA. The catalysed reaction is 1-(9Z-octadecenoyl)-sn-glycero-3-phosphoethanolamine + (9Z)-octadecenoyl-CoA = 1,2-di-(9Z-octadecenoyl)-sn-glycero-3-phosphoethanolamine + CoA. It catalyses the reaction 1-hexadecanoyl-sn-glycero-3-phosphoethanolamine + (9Z)-octadecenoyl-CoA = 1-hexadecanoyl-2-(9Z-octadecenoyl)-sn-glycero-3-phosphoethanolamine + CoA. The enzyme catalyses 1-(10Z-heptadecenoyl)-sn-glycero-3-phosphoethanolamine + hexadecanoyl-CoA = 1-(10Z-heptadecenoyl)-2-hexadecanoyl-sn-glycero-3-phosphoethanolamine + CoA. It carries out the reaction 1-(10Z-heptadecenoyl)-sn-glycero-3-phosphoethanolamine + (9Z)-octadecenoyl-CoA = 1-(10Z-heptadecenoyl)-2-(9Z-octadecenoyl)-sn-glycero-3-phosphoethanolamine + CoA. Its pathway is lipid metabolism; phospholipid metabolism. With respect to regulation, partially inhibited by thimerosal. In terms of biological role, acyltransferase which catalyzes the transfer of an acyl group from an acyl-CoA towards a lysophospholipid producing a phospholipid and participates in the reacylation step of the phospholipid remodeling pathway also known as the Lands cycle. Acts on lysophosphatidylserine (1-acyl-2-hydroxy-sn-glycero-3-phospho-L-serine or LPS) and lysophosphatidylethanolamine (1-acyl-sn-glycero-3-phosphoethanolamine or LPE), and to a lesser extend lysophosphatidylcholine. Prefers oleoyl-CoA as the acyl donor and 1-oleoyl-LPE as acceptor. May play a role in neurite outgrowth during neuronal differentiation. The chain is Membrane-bound glycerophospholipid O-acyltransferase 1 from Homo sapiens (Human).